A 49-amino-acid polypeptide reads, in one-letter code: Osteocalcin (49 aa).

Residues 1–47 (YLDHGLGAPAPYVDPLEPKREVCELNPDCDELADQMGFQEAYRRFYG) enclose the Gla domain. Pro9 bears the 4-hydroxyproline mark. Residues Glu17, Glu21, Glu24, and Asp30 each coordinate Ca(2+). Residues Glu17, Glu21, and Glu24 each carry the 4-carboxyglutamate modification. Cys23 and Cys29 are disulfide-bonded.

It belongs to the osteocalcin/matrix Gla protein family. In terms of processing, gamma-carboxyglutamic acid residues are formed by vitamin K dependent carboxylation. These residues are essential for the binding of calcium.

It is found in the secreted. Functionally, the carboxylated form is one of the main organic components of the bone matrix, which constitutes 1-2% of the total bone protein: it acts as a negative regulator of bone formation and is required to limit bone formation without impairing bone resorption or mineralization. The carboxylated form binds strongly to apatite and calcium. In terms of biological role, the uncarboxylated form acts as a hormone secreted by osteoblasts, which regulates different cellular processes, such as energy metabolism, male fertility and brain development. Regulates of energy metabolism by acting as a hormone favoring pancreatic beta-cell proliferation, insulin secretion and sensitivity and energy expenditure. Uncarboxylated osteocalcin hormone also promotes testosterone production in the testes: acts as a ligand for G protein-coupled receptor GPRC6A at the surface of Leydig cells, initiating a signaling response that promotes the expression of enzymes required for testosterone synthesis in a CREB-dependent manner. Also acts as a regulator of brain development: osteocalcin hormone crosses the blood-brain barrier and acts as a ligand for GPR158 on neurons, initiating a signaling response that prevents neuronal apoptosis in the hippocampus, favors the synthesis of all monoamine neurotransmitters and inhibits that of gamma-aminobutyric acid (GABA). Osteocalcin also crosses the placenta during pregnancy and maternal osteocalcin is required for fetal brain development. This chain is Osteocalcin, found in Lama guanicoe (Guanaco).